A 109-amino-acid chain; its full sequence is ATPase inhibitor, mitochondrial (109 aa).

Residues 1-25 (MAATALAARTRQAVWSVWAMQGRGF) constitute a mitochondrion transit peptide. The interval 26–52 (GSESGDNVRSSAGAVRDAGGAFGKREQ) is disordered. Positions 26–52 (GSESGDNVRSSAGAVRDAGGAFGKREQ) are N-terminal inhibitory region. Positions 69 to 109 (ALKKHHENEISHHAKEIERLQKEIERHKQSIKKLKQSEDDD) form a coiled coil. The antiparallel alpha-helical coiled coil region stretch occupies residues 74–106 (HENEISHHAKEIERLQKEIERHKQSIKKLKQSE). At K103 the chain carries N6-succinyllysine.

The protein belongs to the ATPase inhibitor family. In terms of assembly, homodimer; represents the active form and is present at a pH value below 6.5. Homotetramer; represents the inactive form and is present at a pH value above 7.0.

It localises to the mitochondrion. Endogenous F(1)F(o)-ATPase inhibitor limiting ATP depletion when the mitochondrial membrane potential falls below a threshold and the F(1)F(o)-ATP synthase starts hydrolyzing ATP to pump protons out of the mitochondrial matrix. Required to avoid the consumption of cellular ATP when the F(1)F(o)-ATP synthase enzyme acts as an ATP hydrolase. Indirectly acts as a regulator of heme synthesis in erythroid tissues: regulates heme synthesis by modulating the mitochondrial pH and redox potential, allowing FECH to efficiently catalyze the incorporation of iron into protoporphyrin IX to produce heme. This Bos taurus (Bovine) protein is ATPase inhibitor, mitochondrial.